Reading from the N-terminus, the 296-residue chain is Bifunctional protein FolD 1/3 (296 aa).

NADP(+)-binding positions include 166–168, Ser191, and Ile232; that span reads GRS.

Belongs to the tetrahydrofolate dehydrogenase/cyclohydrolase family. As to quaternary structure, homodimer.

It carries out the reaction (6R)-5,10-methylene-5,6,7,8-tetrahydrofolate + NADP(+) = (6R)-5,10-methenyltetrahydrofolate + NADPH. The enzyme catalyses (6R)-5,10-methenyltetrahydrofolate + H2O = (6R)-10-formyltetrahydrofolate + H(+). It participates in one-carbon metabolism; tetrahydrofolate interconversion. Functionally, catalyzes the oxidation of 5,10-methylenetetrahydrofolate to 5,10-methenyltetrahydrofolate and then the hydrolysis of 5,10-methenyltetrahydrofolate to 10-formyltetrahydrofolate. This chain is Bifunctional protein FolD 1/3, found in Ruegeria pomeroyi (strain ATCC 700808 / DSM 15171 / DSS-3) (Silicibacter pomeroyi).